The following is a 261-amino-acid chain: NAD-capped RNA hydrolase NudC (261 aa).

R74 contacts substrate. Residues C103, C106, C121, and C124 each coordinate Zn(2+). Y129 is a substrate binding site. Positions 130-253 constitute a Nudix hydrolase domain; that stretch reads PRIFPCIIVA…TIARALIEQT (124 aa). The a divalent metal cation site is built by A163, E179, and E183. The Nudix box motif lies at 164–185; that stretch reads GFVEVGETLEQCVAREVKEETG. 197 to 204 provides a ligand contact to substrate; it reads QPWAFPSS. E224 contacts a divalent metal cation. Position 246 (A246) interacts with substrate.

Belongs to the Nudix hydrolase family. NudC subfamily. Homodimer. Mg(2+) is required as a cofactor. Requires Mn(2+) as cofactor. It depends on Zn(2+) as a cofactor.

The catalysed reaction is a 5'-end NAD(+)-phospho-ribonucleoside in mRNA + H2O = a 5'-end phospho-adenosine-phospho-ribonucleoside in mRNA + beta-nicotinamide D-ribonucleotide + 2 H(+). It catalyses the reaction NAD(+) + H2O = beta-nicotinamide D-ribonucleotide + AMP + 2 H(+). The enzyme catalyses NADH + H2O = reduced beta-nicotinamide D-ribonucleotide + AMP + 2 H(+). In terms of biological role, mRNA decapping enzyme that specifically removes the nicotinamide adenine dinucleotide (NAD) cap from a subset of mRNAs by hydrolyzing the diphosphate linkage to produce nicotinamide mononucleotide (NMN) and 5' monophosphate mRNA. The NAD-cap is present at the 5'-end of some mRNAs and stabilizes RNA against 5'-processing. Has preference for mRNAs with a 5'-end purine. Catalyzes the hydrolysis of a broad range of dinucleotide pyrophosphates. The polypeptide is NAD-capped RNA hydrolase NudC (Vibrio vulnificus (strain CMCP6)).